The sequence spans 81 residues: Short neurotoxin 2 (81 aa).

The first 21 residues, 1 to 21, serve as a signal peptide directing secretion; that stretch reads MKTLLLTLVVVTIVCLDLGYT. Intrachain disulfides connect cysteine 24–cysteine 43, cysteine 38–cysteine 60, cysteine 62–cysteine 73, and cysteine 74–cysteine 79.

This sequence belongs to the three-finger toxin family. Short-chain subfamily. Type I alpha-neurotoxin sub-subfamily. Expressed by the venom gland.

It is found in the secreted. In terms of biological role, binds to muscle nicotinic acetylcholine receptor (nAChR) and inhibit acetylcholine from binding to the receptor, thereby impairing neuromuscular transmission. This chain is Short neurotoxin 2, found in Cryptophis nigrescens (Eastern small-eyed snake).